The chain runs to 362 residues: Chorismate synthase (362 aa).

R46 contacts NADP(+). Residues 122-124, 238-239, G278, 293-297, and R319 each bind FMN; these read RSS, NA, and KPTPS.

The protein belongs to the chorismate synthase family. As to quaternary structure, homotetramer. FMNH2 is required as a cofactor.

It catalyses the reaction 5-O-(1-carboxyvinyl)-3-phosphoshikimate = chorismate + phosphate. Its pathway is metabolic intermediate biosynthesis; chorismate biosynthesis; chorismate from D-erythrose 4-phosphate and phosphoenolpyruvate: step 7/7. Catalyzes the anti-1,4-elimination of the C-3 phosphate and the C-6 proR hydrogen from 5-enolpyruvylshikimate-3-phosphate (EPSP) to yield chorismate, which is the branch point compound that serves as the starting substrate for the three terminal pathways of aromatic amino acid biosynthesis. This reaction introduces a second double bond into the aromatic ring system. This is Chorismate synthase from Campylobacter jejuni subsp. jejuni serotype O:2 (strain ATCC 700819 / NCTC 11168).